The primary structure comprises 363 residues: UDP-N-acetylglucosamine--N-acetylmuramyl-(pentapeptide) pyrophosphoryl-undecaprenol N-acetylglucosamine transferase (363 aa).

Residues 10-12 (TGG), Asn124, Ser195, Ile250, and Gln295 each bind UDP-N-acetyl-alpha-D-glucosamine.

Belongs to the glycosyltransferase 28 family. MurG subfamily.

Its subcellular location is the cell membrane. The catalysed reaction is di-trans,octa-cis-undecaprenyl diphospho-N-acetyl-alpha-D-muramoyl-L-alanyl-D-glutamyl-meso-2,6-diaminopimeloyl-D-alanyl-D-alanine + UDP-N-acetyl-alpha-D-glucosamine = di-trans,octa-cis-undecaprenyl diphospho-[N-acetyl-alpha-D-glucosaminyl-(1-&gt;4)]-N-acetyl-alpha-D-muramoyl-L-alanyl-D-glutamyl-meso-2,6-diaminopimeloyl-D-alanyl-D-alanine + UDP + H(+). The protein operates within cell wall biogenesis; peptidoglycan biosynthesis. Functionally, cell wall formation. Catalyzes the transfer of a GlcNAc subunit on undecaprenyl-pyrophosphoryl-MurNAc-pentapeptide (lipid intermediate I) to form undecaprenyl-pyrophosphoryl-MurNAc-(pentapeptide)GlcNAc (lipid intermediate II). The chain is UDP-N-acetylglucosamine--N-acetylmuramyl-(pentapeptide) pyrophosphoryl-undecaprenol N-acetylglucosamine transferase from Listeria welshimeri serovar 6b (strain ATCC 35897 / DSM 20650 / CCUG 15529 / CIP 8149 / NCTC 11857 / SLCC 5334 / V8).